The chain runs to 400 residues: Dual specificity mitogen-activated protein kinase kinase 2 (400 aa).

Met-1 carries the N-acetylmethionine modification. Ser-23 bears the Phosphoserine mark. The region spanning 72–369 (FERISELGAG…LKMLTNHTFI (298 aa)) is the Protein kinase domain. ATP-binding positions include 78–86 (LGAGNGGVV) and Lys-101. The active-site Proton acceptor is Asp-194. Residues Ser-222 and Ser-226 each carry the (Microbial infection) O-acetylserine; by Yersinia YopJ; alternate modification. Ser-222 carries the phosphoserine; by RAF; alternate modification. Ser-226 carries the phosphoserine; alternate modification. Residues 286-310 (GEEGEPHSISPRPRPPGRPVSGHGM) form a disordered region. Residues Ser-293, Ser-295, and Ser-306 each carry the phosphoserine modification. Thr-394 and Thr-396 each carry phosphothreonine.

This sequence belongs to the protein kinase superfamily. STE Ser/Thr protein kinase family. MAP kinase kinase subfamily. Interacts with MORG1. Interacts with SGK1. Interacts with KSR1. Interacts with KSR1 and BRAF; the interaction with KSR1 mediates KSR1-BRAF dimerization. Interacts with GLS. Requires Mg(2+) as cofactor. In terms of processing, MAPKK is itself dependent on Ser/Thr phosphorylation for activity catalyzed by MAP kinase kinase kinases (RAF or MEKK1). Phosphorylated by MAP2K1/MEK1. Post-translationally, (Microbial infection) Acetylation of Ser-222 and Ser-226 by Yersinia YopJ prevents phosphorylation and activation, thus blocking the MAPK signaling pathway.

Its subcellular location is the cytoplasm. It is found in the membrane. The enzyme catalyses L-seryl-[protein] + ATP = O-phospho-L-seryl-[protein] + ADP + H(+). It catalyses the reaction L-threonyl-[protein] + ATP = O-phospho-L-threonyl-[protein] + ADP + H(+). The catalysed reaction is L-tyrosyl-[protein] + ATP = O-phospho-L-tyrosyl-[protein] + ADP + H(+). In terms of biological role, catalyzes the concomitant phosphorylation of a threonine and a tyrosine residue in a Thr-Glu-Tyr sequence located in MAP kinases. Activates the ERK1 and ERK2 MAP kinases. Activates BRAF in a KSR1 or KSR2-dependent manner; by binding to KSR1 or KSR2 releases the inhibitory intramolecular interaction between KSR1 or KSR2 protein kinase and N-terminal domains which promotes KSR1 or KSR2-BRAF dimerization and BRAF activation. This is Dual specificity mitogen-activated protein kinase kinase 2 (MAP2K2) from Homo sapiens (Human).